Here is a 345-residue protein sequence, read N- to C-terminus: Annexin A9 (345 aa).

Annexin repeat units follow at residues 41-112 (FSVD…ALLQ), 113-184 (PAAQ…ALSK), 197-266 (NLEE…SLAS), and 270-341 (NTAL…ALCR).

Belongs to the annexin family. As to quaternary structure, homodimer.

May act as a low affinity receptor for acetylcholine. This is Annexin A9 (Anxa9) from Mus musculus (Mouse).